The sequence spans 282 residues: 4-hydroxy-3-methylbut-2-enyl diphosphate reductase (282 aa).

A [4Fe-4S] cluster-binding site is contributed by cysteine 12. Positions 40 and 72 each coordinate (2E)-4-hydroxy-3-methylbut-2-enyl diphosphate. Residues histidine 40 and histidine 72 each coordinate dimethylallyl diphosphate. Histidine 40 and histidine 72 together coordinate isopentenyl diphosphate. Cysteine 94 provides a ligand contact to [4Fe-4S] cluster. Histidine 122 serves as a coordination point for (2E)-4-hydroxy-3-methylbut-2-enyl diphosphate. Histidine 122 is a dimethylallyl diphosphate binding site. An isopentenyl diphosphate-binding site is contributed by histidine 122. Glutamate 124 serves as the catalytic Proton donor. Threonine 160 is a binding site for (2E)-4-hydroxy-3-methylbut-2-enyl diphosphate. Cysteine 188 serves as a coordination point for [4Fe-4S] cluster. Positions 216, 218, and 260 each coordinate (2E)-4-hydroxy-3-methylbut-2-enyl diphosphate. 3 residues coordinate dimethylallyl diphosphate: serine 216, asparagine 218, and serine 260. Residues serine 216, asparagine 218, and serine 260 each coordinate isopentenyl diphosphate.

It belongs to the IspH family. Requires [4Fe-4S] cluster as cofactor.

It catalyses the reaction isopentenyl diphosphate + 2 oxidized [2Fe-2S]-[ferredoxin] + H2O = (2E)-4-hydroxy-3-methylbut-2-enyl diphosphate + 2 reduced [2Fe-2S]-[ferredoxin] + 2 H(+). It carries out the reaction dimethylallyl diphosphate + 2 oxidized [2Fe-2S]-[ferredoxin] + H2O = (2E)-4-hydroxy-3-methylbut-2-enyl diphosphate + 2 reduced [2Fe-2S]-[ferredoxin] + 2 H(+). The protein operates within isoprenoid biosynthesis; dimethylallyl diphosphate biosynthesis; dimethylallyl diphosphate from (2E)-4-hydroxy-3-methylbutenyl diphosphate: step 1/1. It functions in the pathway isoprenoid biosynthesis; isopentenyl diphosphate biosynthesis via DXP pathway; isopentenyl diphosphate from 1-deoxy-D-xylulose 5-phosphate: step 6/6. Functionally, catalyzes the conversion of 1-hydroxy-2-methyl-2-(E)-butenyl 4-diphosphate (HMBPP) into a mixture of isopentenyl diphosphate (IPP) and dimethylallyl diphosphate (DMAPP). Acts in the terminal step of the DOXP/MEP pathway for isoprenoid precursor biosynthesis. The sequence is that of 4-hydroxy-3-methylbut-2-enyl diphosphate reductase from Geobacter sulfurreducens (strain ATCC 51573 / DSM 12127 / PCA).